A 152-amino-acid polypeptide reads, in one-letter code: Snaclec coagulation factor IX/factor X-binding protein subunit A (152 aa).

The signal sequence occupies residues 1-23; it reads MGRFIFVSFGLLVVAASLSGTGA. Disulfide bonds link Cys-25–Cys-36, Cys-53–Cys-150, and Cys-125–Cys-142. Residues 32-151 enclose the C-type lectin domain; it reads YEGHCYKAFE…CGQRIPFVCE (120 aa). Positions 64, 66, and 70 each coordinate Ca(2+). Residue Glu-151 coordinates Ca(2+).

The protein belongs to the snaclec family. In terms of assembly, heterodimer of subunits A and B; disulfide-linked. As to expression, expressed by the venom gland.

The protein localises to the secreted. In terms of biological role, anticoagulant protein which binds to the gamma-carboxyglutamic acid-domain regions of factors IX (F9) and factor X (F10) in the presence of calcium with a 1 to 1 stoichiometry. In Trimeresurus stejnegeri (Chinese green tree viper), this protein is Snaclec coagulation factor IX/factor X-binding protein subunit A.